A 175-amino-acid chain; its full sequence is Nucleoside triphosphate/diphosphate phosphatase (175 aa).

The Proton donor role is filled by Arg23. Residues Asn87, Asp103, Asp105, Asp107, Asp120, and Glu123 each contribute to the Mg(2+) site.

This sequence belongs to the Ntdp family. Mg(2+) serves as cofactor.

The catalysed reaction is a ribonucleoside 5'-triphosphate + H2O = a ribonucleoside 5'-diphosphate + phosphate + H(+). It carries out the reaction a ribonucleoside 5'-diphosphate + H2O = a ribonucleoside 5'-phosphate + phosphate + H(+). Its function is as follows. Has nucleoside phosphatase activity towards nucleoside triphosphates and nucleoside diphosphates. In Listeria innocua serovar 6a (strain ATCC BAA-680 / CLIP 11262), this protein is Nucleoside triphosphate/diphosphate phosphatase.